Here is a 359-residue protein sequence, read N- to C-terminus: 3-dehydroquinate synthase (359 aa).

NAD(+) contacts are provided by residues 106–110 (GVVGD), 130–131 (TS), Lys-143, and Lys-152. Glu-185, His-246, and His-263 together coordinate Zn(2+).

The protein belongs to the sugar phosphate cyclases superfamily. Dehydroquinate synthase family. Co(2+) serves as cofactor. It depends on Zn(2+) as a cofactor. Requires NAD(+) as cofactor.

Its subcellular location is the cytoplasm. It carries out the reaction 7-phospho-2-dehydro-3-deoxy-D-arabino-heptonate = 3-dehydroquinate + phosphate. The protein operates within metabolic intermediate biosynthesis; chorismate biosynthesis; chorismate from D-erythrose 4-phosphate and phosphoenolpyruvate: step 2/7. Functionally, catalyzes the conversion of 3-deoxy-D-arabino-heptulosonate 7-phosphate (DAHP) to dehydroquinate (DHQ). This is 3-dehydroquinate synthase from Clostridium kluyveri (strain ATCC 8527 / DSM 555 / NBRC 12016 / NCIMB 10680 / K1).